A 287-amino-acid polypeptide reads, in one-letter code: ATP synthase gamma chain (287 aa).

Belongs to the ATPase gamma chain family. F-type ATPases have 2 components, CF(1) - the catalytic core - and CF(0) - the membrane proton channel. CF(1) has five subunits: alpha(3), beta(3), gamma(1), delta(1), epsilon(1). CF(0) has three main subunits: a, b and c.

The protein resides in the cell inner membrane. Its function is as follows. Produces ATP from ADP in the presence of a proton gradient across the membrane. The gamma chain is believed to be important in regulating ATPase activity and the flow of protons through the CF(0) complex. In Xylella fastidiosa (strain 9a5c), this protein is ATP synthase gamma chain.